A 637-amino-acid polypeptide reads, in one-letter code: MNNQGRSILAWAALFIFVILLFNVFQSDGLLGVRNNITFSDFLTRVDERTINSVKIQGRVIEGTSNDGSTFSTYSPDYPDLVNRLTSNDVNIEVVPLETRMNTFLGFLISWFPMLLLIGVWVFFMRQMHGGGKAMGFGKSKARLLSDKGPKITFKDVAGIDEAKEELTEIVDFLRDPSKFQKLGGKIPKGCLLIGPPGTGKTLLAKAIAGEANVPFFSISGSDFVEMFVGVGASRVRDMFEQGKRNAPCIIFIDEIDAVGRHRGIGMGGGNDEREQTLNQMLVEMDGFEANEGVVIIAATNRPDVLDRALLRPGRFDRQIAVANPDINGREQILKVHLKKIKYNSTVLARIIARGTPGFSGAELANLVNEAALIAARLGKKEVDMHDMEEAKDKVLMGVVRRSIAMSEKEKRLTAYHEGGHALVGLYCPAASPIHKATIIPRGNALGMVQRLPETDEYSQNREQMESSIAVYMAGRVAEEIIFGKNKVTSGAASDIKGATNIARAMVTKAGLSDLIGPIFHGSSSDDMYGRQQSNEISEATAKLIDAEVKKIITQGYEFAKDILTKHIDQLHTLANALIEYETLSGQQIKNLLSGRALDSEEENKFPFNDAHTIKIDKEKLHEKTKTTKAQKENIAS.

The Cytoplasmic segment spans residues 1–6 (MNNQGR). The helical transmembrane segment at 7–27 (SILAWAALFIFVILLFNVFQS) threads the bilayer. Over 28–103 (DGLLGVRNNI…VVPLETRMNT (76 aa)) the chain is Periplasmic. Residues 104-124 (FLGFLISWFPMLLLIGVWVFF) form a helical membrane-spanning segment. Residues 125 to 637 (MRQMHGGGKA…TKAQKENIAS (513 aa)) lie on the Cytoplasmic side of the membrane. Residue 195–202 (GPPGTGKT) participates in ATP binding. Residue histidine 417 participates in Zn(2+) binding. The active site involves glutamate 418. Zn(2+)-binding residues include histidine 421 and aspartate 495. Residues 617-637 (DKEKLHEKTKTTKAQKENIAS) form a disordered region.

This sequence in the central section; belongs to the AAA ATPase family. It in the C-terminal section; belongs to the peptidase M41 family. Homohexamer. Requires Zn(2+) as cofactor.

The protein resides in the cell inner membrane. In terms of biological role, acts as a processive, ATP-dependent zinc metallopeptidase for both cytoplasmic and membrane proteins. Plays a role in the quality control of integral membrane proteins. This Rickettsia typhi (strain ATCC VR-144 / Wilmington) protein is ATP-dependent zinc metalloprotease FtsH.